The chain runs to 497 residues: Vacuolar fusion protein CCZ1 homolog B (497 aa).

Residues 244 to 284 are disordered; it reads GTSSWSYLRKGSGSPQISSRSTTVPPLGSGGTLPSGNGSST.

Belongs to the CCZ1 family. In terms of assembly, interacts with MON1.

It localises to the endosome. Its subcellular location is the prevacuolar compartment. Its function is as follows. Plays an important role in membrane trafficking through the secretory apparatus. In complex with MON1, acts as a guanine exchange factor (GEF) for RABG3F of the RAB7 protein family. Promotes the exchange of GDP to GTP, converting RABG3F from an inactive GDP-bound form into an active GTP-bound form. The RABG3F active form is involved in protein trafficking from prevacuolar compartments (PVCs) to vacuoles. May serve as a linker between Rab5 and Rab7 protein families in PVCs and mediate PVC maturation. This Arabidopsis thaliana (Mouse-ear cress) protein is Vacuolar fusion protein CCZ1 homolog B.